The chain runs to 333 residues: Adenosine deaminase (333 aa).

Zn(2+) contacts are provided by histidine 12 and histidine 14. The substrate site is built by histidine 14, aspartate 16, and glycine 170. Histidine 197 provides a ligand contact to Zn(2+). The Proton donor role is filled by glutamate 200. Aspartate 278 is a binding site for Zn(2+). A substrate-binding site is contributed by aspartate 279.

The protein belongs to the metallo-dependent hydrolases superfamily. Adenosine and AMP deaminases family. Adenosine deaminase subfamily. Requires Zn(2+) as cofactor.

It catalyses the reaction adenosine + H2O + H(+) = inosine + NH4(+). The enzyme catalyses 2'-deoxyadenosine + H2O + H(+) = 2'-deoxyinosine + NH4(+). Its function is as follows. Catalyzes the hydrolytic deamination of adenosine and 2-deoxyadenosine. The sequence is that of Adenosine deaminase from Klebsiella pneumoniae (strain 342).